Consider the following 317-residue polypeptide: Gamma-glutamyl hydrolase (317 aa).

Residues 1 to 24 (MANLGYLLCLLGLLLCGLSSPGMS) form the signal peptide. The region spanning 25-317 (RPYNHGSERP…SSFQQAYMFD (293 aa)) is the Gamma-glutamyl hydrolase domain. N-linked (GlcNAc...) (high mannose) asparagine glycosylation occurs at Asn100. Cys133 (nucleophile) is an active-site residue. Asn162 and Asn188 each carry an N-linked (GlcNAc...) (high mannose) asparagine glycan. Asn202 is a glycosylation site (N-linked (GlcNAc...) asparagine). His243 functions as the Proton donor in the catalytic mechanism. A glycan (N-linked (GlcNAc...) asparagine) is linked at Asn306.

It belongs to the peptidase C26 family. In terms of assembly, homodimer. Isoform I (more expressed than isoform II in all tissues) is highly expressed in salivary gland, followed by kidney, liver, lung, stomach and uterus, and weakly expressed in small intestine, brain and fetal liver. Also expressed at a lower level in thymus, spleen and skeletal muscle. Also expressed in tumors.

The protein resides in the secreted. Its subcellular location is the extracellular space. The protein localises to the lysosome. It localises to the melanosome. The enzyme catalyses (6S)-5,6,7,8-tetrahydrofolyl-(gamma-L-Glu)(n) + (n-1) H2O = (6S)-5,6,7,8-tetrahydrofolate + (n-1) L-glutamate. Its function is as follows. Hydrolyzes the polyglutamate sidechains of pteroylpolyglutamates. Progressively removes gamma-glutamyl residues from pteroylpoly-gamma-glutamate to yield pteroyl-alpha-glutamate (folic acid) and free glutamate. May play an important role in the bioavailability of dietary pteroylpolyglutamates and in the metabolism of pteroylpolyglutamates and antifolates. The polypeptide is Gamma-glutamyl hydrolase (Ggh) (Mus musculus (Mouse)).